Reading from the N-terminus, the 622-residue chain is Signal recognition particle subunit SRP68 (622 aa).

The interval 576–622 is disordered; that stretch reads RDATPKKAAKGSSAAAASSKTSNQEEEEQQGLTGMLSGWKKSFWGNK. The span at 585 to 595 shows a compositional bias: low complexity; it reads KGSSAAAASSK.

The protein belongs to the SRP68 family. In terms of assembly, heterodimer with srpa-72. Srpa-68/srpa-72 heterodimer formation is stabilized by the presence of 7SL RNA. Component of a signal recognition particle (SRP) complex that consists of a 7SL RNA molecule of 300 nucleotides and six protein subunits: srpa-72, srpa-68, SRP54, F37F2.2/SRP19, F25G6.8/SRP14 and ZK512.4/SRP9. Within the SRP complex, interacts (via C-terminus) with srpa-72 (via N-terminus).

The protein localises to the cytoplasm. Its subcellular location is the nucleus. It is found in the nucleolus. It localises to the endoplasmic reticulum. In terms of biological role, component of the signal recognition particle (SRP) complex, a ribonucleoprotein complex that mediates the cotranslational targeting of secretory and membrane proteins to the endoplasmic reticulum (ER). The SRP complex interacts with the signal sequence in nascent secretory and membrane proteins and directs them to the membrane of the ER. The SRP complex targets the ribosome-nascent chain complex to the SRP receptor (SR), which is anchored in the ER, where SR compaction and GTPase rearrangement drive cotranslational protein translocation into the ER. Binds the signal recognition particle RNA (7SL RNA), srpa-72 binds to this complex subsequently. The SRP complex possibly participates in the elongation arrest function. The protein is Signal recognition particle subunit SRP68 of Caenorhabditis elegans.